Consider the following 296-residue polypeptide: Phosphatidylserine decarboxylase proenzyme (296 aa).

Catalysis depends on charge relay system; for autoendoproteolytic cleavage activity residues Asp92, His149, and Ser251. Ser251 (schiff-base intermediate with substrate; via pyruvic acid; for decarboxylase activity) is an active-site residue. At Ser251 the chain carries Pyruvic acid (Ser); by autocatalysis.

It belongs to the phosphatidylserine decarboxylase family. PSD-B subfamily. Prokaryotic type I sub-subfamily. As to quaternary structure, heterodimer of a large membrane-associated beta subunit and a small pyruvoyl-containing alpha subunit. Requires pyruvate as cofactor. Post-translationally, is synthesized initially as an inactive proenzyme. Formation of the active enzyme involves a self-maturation process in which the active site pyruvoyl group is generated from an internal serine residue via an autocatalytic post-translational modification. Two non-identical subunits are generated from the proenzyme in this reaction, and the pyruvate is formed at the N-terminus of the alpha chain, which is derived from the carboxyl end of the proenzyme. The autoendoproteolytic cleavage occurs by a canonical serine protease mechanism, in which the side chain hydroxyl group of the serine supplies its oxygen atom to form the C-terminus of the beta chain, while the remainder of the serine residue undergoes an oxidative deamination to produce ammonia and the pyruvoyl prosthetic group on the alpha chain. During this reaction, the Ser that is part of the protease active site of the proenzyme becomes the pyruvoyl prosthetic group, which constitutes an essential element of the active site of the mature decarboxylase.

It localises to the cell membrane. The enzyme catalyses a 1,2-diacyl-sn-glycero-3-phospho-L-serine + H(+) = a 1,2-diacyl-sn-glycero-3-phosphoethanolamine + CO2. Its pathway is phospholipid metabolism; phosphatidylethanolamine biosynthesis; phosphatidylethanolamine from CDP-diacylglycerol: step 2/2. Its function is as follows. Catalyzes the formation of phosphatidylethanolamine (PtdEtn) from phosphatidylserine (PtdSer). In Hahella chejuensis (strain KCTC 2396), this protein is Phosphatidylserine decarboxylase proenzyme.